The following is an 86-amino-acid chain: Large ribosomal subunit protein uL23 (86 aa).

It belongs to the universal ribosomal protein uL23 family. As to quaternary structure, part of the 50S ribosomal subunit. Contacts protein L29.

Functionally, binds to 23S rRNA. One of the proteins that surrounds the polypeptide exit tunnel on the outside of the ribosome. The polypeptide is Large ribosomal subunit protein uL23 (Pyrococcus furiosus (strain ATCC 43587 / DSM 3638 / JCM 8422 / Vc1)).